Consider the following 138-residue polypeptide: Iron sulfur cluster assembly protein 1 (138 aa).

The protein belongs to the NifU family. As to quaternary structure, component of the core Fe-S cluster (ISC) assembly machinery. The cofactor is [2Fe-2S] cluster.

The protein localises to the cytoplasm. It functions in the pathway cofactor biosynthesis; iron-sulfur cluster biosynthesis. Functionally, scaffold protein for the de novo synthesis of iron-sulfur (Fe-S) clusters within mitosomes, which is required for maturation of both [2Fe-2S] and [4Fe-4S] proteins. First, a [2Fe-2S] cluster is transiently assembled on the scaffold protein ISU1. In a second step, the cluster is released from ISU1, transferred to a glutaredoxin, followed by the formation of [2Fe-2S] proteins, the synthesis of [4Fe-4S] clusters and their target-specific insertion into the recipient apoproteins. Cluster assembly on ISU1 depends on the function of the cysteine desulfurase complex NFS1-ISD11, which serves as the sulfur donor for cluster synthesis, the iron-binding protein frataxin as the putative iron donor, and the electron transfer chain comprised of ferredoxin reductase and ferredoxin, which receive their electrons from NADH. This chain is Iron sulfur cluster assembly protein 1 (ISU1), found in Trachipleistophora hominis (Microsporidian parasite).